Here is a 317-residue protein sequence, read N- to C-terminus: Homoserine O-acetyltransferase (317 aa).

Cysteine 142 (acyl-thioester intermediate) is an active-site residue. The substrate site is built by lysine 163 and serine 192. The active-site Proton acceptor is histidine 235. Glutamate 237 is a catalytic residue. Residue arginine 249 participates in substrate binding.

This sequence belongs to the MetA family.

Its subcellular location is the cytoplasm. It carries out the reaction L-homoserine + acetyl-CoA = O-acetyl-L-homoserine + CoA. It participates in amino-acid biosynthesis; L-methionine biosynthesis via de novo pathway; O-acetyl-L-homoserine from L-homoserine: step 1/1. Transfers an acetyl group from acetyl-CoA to L-homoserine, forming acetyl-L-homoserine. The sequence is that of Homoserine O-acetyltransferase from Rhizorhabdus wittichii (strain DSM 6014 / CCUG 31198 / JCM 15750 / NBRC 105917 / EY 4224 / RW1) (Sphingomonas wittichii).